The sequence spans 276 residues: Lysosome-associated membrane glycoprotein 5 (276 aa).

Residues 1 to 27 form the signal peptide; sequence MDYRACTSALRMPVLLLLLCTFSCNLA. Topologically, residues 28–231 are extracellular; that stretch reads EQEVENLSGL…PTDQRKQLEE (204 aa). N-linked (GlcNAc...) asparagine glycosylation is found at Asn-33, Asn-51, and Asn-100. Residues 232–252 form a helical membrane-spanning segment; that stretch reads TLPLILGLTLGVAILIIVAVY. Residues 253-276 lie on the Cytoplasmic side of the membrane; it reads HIHHKMTANQVQIPRDRSLYKHMG.

Belongs to the LAMP family. Glycosylated.

It localises to the cytoplasmic vesicle membrane. It is found in the cell membrane. The protein resides in the cell projection. Its subcellular location is the dendrite. The protein localises to the cytoplasmic vesicle. It localises to the secretory vesicle. It is found in the synaptic vesicle membrane. The protein resides in the growth cone membrane. Its subcellular location is the early endosome membrane. The protein localises to the recycling endosome. It localises to the endoplasmic reticulum-Golgi intermediate compartment membrane. It is found in the endosome membrane. Plays a role in short-term synaptic plasticity in a subset of GABAergic neurons in the brain. In Xenopus tropicalis (Western clawed frog), this protein is Lysosome-associated membrane glycoprotein 5 (lamp5).